The chain runs to 282 residues: DNA-binding transcriptional repressor YiaJ (282 aa).

The segment covering 1–20 (MGKEVMGKKENEMAQEKERP) has biased composition (basic and acidic residues). Residues 1–21 (MGKEVMGKKENEMAQEKERPA) are disordered. In terms of domain architecture, HTH iclR-type spans 23-85 (SQSLFRGLML…PAAGSYRLTT (63 aa)). Residues 45-64 (LAHLSELAGLNKSTVHRLLQ) constitute a DNA-binding region (H-T-H motif). The IclR-ED domain occupies 100–272 (IIHIAAPHLE…AQAISNELGF (173 aa)).

Negatively controls the transcription of the yiaKLMNOPQRS operon, which may be involved in the utilization of 2,3-diketo-L-gulonate. This is DNA-binding transcriptional repressor YiaJ (yiaJ) from Escherichia coli (strain K12).